We begin with the raw amino-acid sequence, 313 residues long: Methionyl-tRNA formyltransferase (313 aa).

112 to 115 (SLLP) is a (6S)-5,6,7,8-tetrahydrofolate binding site.

Belongs to the Fmt family.

It catalyses the reaction L-methionyl-tRNA(fMet) + (6R)-10-formyltetrahydrofolate = N-formyl-L-methionyl-tRNA(fMet) + (6S)-5,6,7,8-tetrahydrofolate + H(+). Functionally, attaches a formyl group to the free amino group of methionyl-tRNA(fMet). The formyl group appears to play a dual role in the initiator identity of N-formylmethionyl-tRNA by promoting its recognition by IF2 and preventing the misappropriation of this tRNA by the elongation apparatus. In Roseiflexus castenholzii (strain DSM 13941 / HLO8), this protein is Methionyl-tRNA formyltransferase.